Consider the following 259-residue polypeptide: Malonyl-[acyl-carrier protein] O-methyltransferase (259 aa).

This sequence belongs to the methyltransferase superfamily.

It carries out the reaction malonyl-[ACP] + S-adenosyl-L-methionine = malonyl-[ACP] methyl ester + S-adenosyl-L-homocysteine. Its pathway is cofactor biosynthesis; biotin biosynthesis. Its function is as follows. Converts the free carboxyl group of a malonyl-thioester to its methyl ester by transfer of a methyl group from S-adenosyl-L-methionine (SAM). It allows to synthesize pimeloyl-ACP via the fatty acid synthetic pathway. This is Malonyl-[acyl-carrier protein] O-methyltransferase from Anoxybacillus flavithermus (strain DSM 21510 / WK1).